The chain runs to 503 residues: ATP synthase subunit beta (503 aa).

157–164 contributes to the ATP binding site; that stretch reads GGAGVGKT.

It belongs to the ATPase alpha/beta chains family. As to quaternary structure, F-type ATPases have 2 components, CF(1) - the catalytic core - and CF(0) - the membrane proton channel. CF(1) has five subunits: alpha(3), beta(3), gamma(1), delta(1), epsilon(1). CF(0) has three main subunits: a(1), b(2) and c(9-12). The alpha and beta chains form an alternating ring which encloses part of the gamma chain. CF(1) is attached to CF(0) by a central stalk formed by the gamma and epsilon chains, while a peripheral stalk is formed by the delta and b chains.

It is found in the cell inner membrane. It carries out the reaction ATP + H2O + 4 H(+)(in) = ADP + phosphate + 5 H(+)(out). In terms of biological role, produces ATP from ADP in the presence of a proton gradient across the membrane. The catalytic sites are hosted primarily by the beta subunits. In Flavobacterium psychrophilum (strain ATCC 49511 / DSM 21280 / CIP 103535 / JIP02/86), this protein is ATP synthase subunit beta.